A 75-amino-acid chain; its full sequence is uncharacterized protein (75 aa).

This is an uncharacterized protein from Halalkalibacterium halodurans (strain ATCC BAA-125 / DSM 18197 / FERM 7344 / JCM 9153 / C-125) (Bacillus halodurans).